The chain runs to 196 residues: Small ribosomal subunit protein uS4c (196 aa).

Residues 20 to 39 form a disordered region; that stretch reads GLTRKTPKSGSNLKKKFHSG. The 64-residue stretch at 89 to 152 folds into the S4 RNA-binding domain; the sequence is MRLDNILFRL…RSKCLVQNSI (64 aa).

The protein belongs to the universal ribosomal protein uS4 family. In terms of assembly, part of the 30S ribosomal subunit. Contacts protein S5. The interaction surface between S4 and S5 is involved in control of translational fidelity.

Its subcellular location is the plastid. It localises to the chloroplast. Its function is as follows. One of the primary rRNA binding proteins, it binds directly to 16S rRNA where it nucleates assembly of the body of the 30S subunit. With S5 and S12 plays an important role in translational accuracy. The chain is Small ribosomal subunit protein uS4c (rps4) from Dendrocalamus giganteus (Giant bamboo).